Reading from the N-terminus, the 577-residue chain is MLQTLQQQGLRHVVLCPGSRSGPLALAAAGLMRAGLITLSTAIDERSAGFYALGRSSASGVATAVITTSGTAVANLLPAAVEADRSSQPLLLISADRPLRLKNKGANQTVNQEAFLTPVCRWCGSGPLDGLSAGLDQELQALAQNAWRHLHQQPGPVHLNLPFEEPLHPDLDQQSTFWSQWNSSESVAITHNPELCKPTSHSEAPSLDPDQPGVIVAGPWRGLSATLEPYQAALIAWQQRSGWPVLADPLAAIPSNLGGVIRSWDLLLPNGLSQLPANAQVLRLGSMPASRRLEAWIANQQGPQLLITEGDPRPLDPLEIAEQWSGGLAQWWKQLNPRLRVIDATKPDIEARGGSPLQAWRTADLELQQRLYELLPGHGPANEPALMFALARLLPAELPVMLAASSPVRDWQAFAASDTGRRRCYSFRGASGIDGTLSLALGIAAELGPTVLITGDLALLHDSNGWLLASAAQQPLLVLLIDNAGGGIFEQLPIETTPRDGFNQLFAMPQQVDPLALAAAHSIPVRQLACLDDLPSALEWGLGSAGPTLLRVCTDRSSDAQLRRNLRKALQQSKSLS.

It belongs to the TPP enzyme family. MenD subfamily. In terms of assembly, homodimer. It depends on Mg(2+) as a cofactor. Mn(2+) serves as cofactor. Requires thiamine diphosphate as cofactor.

It catalyses the reaction isochorismate + 2-oxoglutarate + H(+) = 5-enolpyruvoyl-6-hydroxy-2-succinyl-cyclohex-3-ene-1-carboxylate + CO2. Its pathway is quinol/quinone metabolism; 1,4-dihydroxy-2-naphthoate biosynthesis; 1,4-dihydroxy-2-naphthoate from chorismate: step 2/7. The protein operates within cofactor biosynthesis; phylloquinone biosynthesis. Its function is as follows. Catalyzes the thiamine diphosphate-dependent decarboxylation of 2-oxoglutarate and the subsequent addition of the resulting succinic semialdehyde-thiamine pyrophosphate anion to isochorismate to yield 2-succinyl-5-enolpyruvyl-6-hydroxy-3-cyclohexene-1-carboxylate (SEPHCHC). In Synechococcus sp. (strain CC9311), this protein is 2-succinyl-5-enolpyruvyl-6-hydroxy-3-cyclohexene-1-carboxylate synthase.